The chain runs to 215 residues: Rac-like GTP-binding protein ARAC10 (215 aa).

15-22 (GDGAVGKT) is a binding site for GTP. The Effector region motif lies at 37 to 45 (YIPTVFDNF). GTP is bound by residues 62 to 66 (DTAGQ) and 120 to 123 (TKLD). Residues cysteine 202 and cysteine 208 are each lipidated (S-palmitoyl cysteine).

The protein belongs to the small GTPase superfamily. Rho family. As to quaternary structure, component of the active ARAC10-IRC5-KIN13A complex. Interacts with ICR5.

It is found in the membrane. The protein resides in the cytoplasm. It localises to the cytoskeleton. In terms of biological role, involved in local disassembly of cortical microtubules when associated with ICR5 and KIN13A. This is Rac-like GTP-binding protein ARAC10 (ARAC10) from Arabidopsis thaliana (Mouse-ear cress).